Consider the following 100-residue polypeptide: Urease subunit gamma (100 aa).

This sequence belongs to the urease gamma subunit family. Heterotrimer of UreA (gamma), UreB (beta) and UreC (alpha) subunits. Three heterotrimers associate to form the active enzyme.

Its subcellular location is the cytoplasm. The catalysed reaction is urea + 2 H2O + H(+) = hydrogencarbonate + 2 NH4(+). The protein operates within nitrogen metabolism; urea degradation; CO(2) and NH(3) from urea (urease route): step 1/1. This is Urease subunit gamma from Ruegeria pomeroyi (strain ATCC 700808 / DSM 15171 / DSS-3) (Silicibacter pomeroyi).